We begin with the raw amino-acid sequence, 142 residues long: Transcription antitermination protein NusB (142 aa).

Belongs to the NusB family.

Functionally, involved in transcription antitermination. Required for transcription of ribosomal RNA (rRNA) genes. Binds specifically to the boxA antiterminator sequence of the ribosomal RNA (rrn) operons. The chain is Transcription antitermination protein NusB from Streptomyces coelicolor (strain ATCC BAA-471 / A3(2) / M145).